Here is a 1044-residue protein sequence, read N- to C-terminus: GRB10-interacting GYF protein 1 (1044 aa).

Serine 24, serine 28, serine 137, and serine 157 each carry phosphoserine. Disordered regions lie at residues 104–290 (GKGA…DGLP) and 306–424 (ASGA…LEDE). 2 stretches are compositionally biased toward basic and acidic residues: residues 148–179 (NPREIQRSQSWDDRGERRFEKPARRDGVRSGF) and 186–203 (PRKEHARSDSENWRSLRE). Residue serine 228 is modified to Phosphoserine. Basic and acidic residues-rich tracts occupy residues 237 to 265 (GWREHGERRRKFDFDLRGERGGCGEEDGR) and 316 to 332 (GPKEAIPEEQELDFRGL). Residues 333-350 (EEEEEEEEEPSEGVDEER) show a composition bias toward acidic residues. A Phosphoserine modification is found at serine 343. Residues 366–379 (NSSSPSSLPALGPL) are compositionally biased toward low complexity. Residues 389 to 403 (AVEKELPPAEGDELR) are compositionally biased toward basic and acidic residues. Residue serine 408 is modified to Phosphoserine. In terms of domain architecture, GYF spans 476–524 (ARKWFYKDPQGEIQGPFTTQEMAEWFQAGYFSMSLLVKRGCDEGFQPLG). Phosphoserine is present on residues serine 540 and serine 634. The segment covering 692-706 (KREEEERKRREEKRR) has biased composition (basic and acidic residues). Disordered stretches follow at residues 692-721 (KREEEERKRREEKRRQQQQQQEEQKRRQEE), 820-842 (EAGPLWGGPDKSGGSSGGNLGLW), 855-883 (SLGLKSSRSSPSLSDSYSHLSGRPVRKKT), 966-987 (QKASQQRQQQQQQQQQQQQEAW), 1000-1019 (NHSTKLGPGEGSKAKRRALM), and 1024-1044 (PSILGYSLHGPSGEIESVDDY). Gly residues predominate over residues 829–839 (DKSGGSSGGNL). Low complexity-rich tracts occupy residues 855–877 (SLGLKSSRSSPSLSDSYSHLSGR) and 970–984 (QQRQQQQQQQQQQQQ). The residue at position 863 (serine 863) is a Phosphoserine.

Belongs to the GIGYF family. Interacts with GRB10. This transient binding is increased under IGF1 stimulation and leads to recruitment of GIGYF1/GRB10 complex to IGF1 receptor. Interacts with DDX6. In terms of tissue distribution, ubiquitous. Lower expression in skeletal muscle, liver and testis.

In terms of biological role, may act cooperatively with GRB10 to regulate tyrosine kinase receptor signaling. May increase IGF1 receptor phosphorylation under IGF1 stimulation as well as phosphorylation of IRS1 and SHC1. This is GRB10-interacting GYF protein 1 (Gigyf1) from Mus musculus (Mouse).